Consider the following 306-residue polypeptide: Acetaldehyde dehydrogenase 3 (306 aa).

Cys-131 functions as the Acyl-thioester intermediate in the catalytic mechanism. Residues 162-170 and Asn-273 contribute to the NAD(+) site; that span reads SVGPGTRKN.

The protein belongs to the acetaldehyde dehydrogenase family.

The catalysed reaction is acetaldehyde + NAD(+) + CoA = acetyl-CoA + NADH + H(+). The polypeptide is Acetaldehyde dehydrogenase 3 (Burkholderia lata (strain ATCC 17760 / DSM 23089 / LMG 22485 / NCIMB 9086 / R18194 / 383)).